Here is a 264-residue protein sequence, read N- to C-terminus: S-adenosylmethionine decarboxylase proenzyme (264 aa).

The active-site Schiff-base intermediate with substrate; via pyruvic acid is the Ser-112. Residue Ser-112 is modified to Pyruvic acid (Ser); by autocatalysis. The active-site Proton acceptor; for processing activity is His-117. Cys-140 functions as the Proton donor; for catalytic activity in the catalytic mechanism.

This sequence belongs to the prokaryotic AdoMetDC family. Type 2 subfamily. Heterooctamer of four alpha and four beta chains arranged as a tetramer of alpha/beta heterodimers. Requires pyruvate as cofactor. Is synthesized initially as an inactive proenzyme. Formation of the active enzyme involves a self-maturation process in which the active site pyruvoyl group is generated from an internal serine residue via an autocatalytic post-translational modification. Two non-identical subunits are generated from the proenzyme in this reaction, and the pyruvate is formed at the N-terminus of the alpha chain, which is derived from the carboxyl end of the proenzyme. The post-translation cleavage follows an unusual pathway, termed non-hydrolytic serinolysis, in which the side chain hydroxyl group of the serine supplies its oxygen atom to form the C-terminus of the beta chain, while the remainder of the serine residue undergoes an oxidative deamination to produce ammonia and the pyruvoyl group blocking the N-terminus of the alpha chain.

The catalysed reaction is S-adenosyl-L-methionine + H(+) = S-adenosyl 3-(methylsulfanyl)propylamine + CO2. The protein operates within amine and polyamine biosynthesis; S-adenosylmethioninamine biosynthesis; S-adenosylmethioninamine from S-adenosyl-L-methionine: step 1/1. Its function is as follows. Catalyzes the decarboxylation of S-adenosylmethionine to S-adenosylmethioninamine (dcAdoMet), the propylamine donor required for the synthesis of the polyamines spermine and spermidine from the diamine putrescine. The polypeptide is S-adenosylmethionine decarboxylase proenzyme (Shigella boydii serotype 4 (strain Sb227)).